Consider the following 394-residue polypeptide: Chorismate synthase (394 aa).

2 residues coordinate NADP(+): Arg40 and Arg46. Residues 135 to 137, 255 to 256, Gly302, 317 to 321, and Arg343 each bind FMN; these read RAS, QA, and KPISS.

This sequence belongs to the chorismate synthase family. In terms of assembly, homotetramer. Requires FMNH2 as cofactor.

The catalysed reaction is 5-O-(1-carboxyvinyl)-3-phosphoshikimate = chorismate + phosphate. It functions in the pathway metabolic intermediate biosynthesis; chorismate biosynthesis; chorismate from D-erythrose 4-phosphate and phosphoenolpyruvate: step 7/7. Functionally, catalyzes the anti-1,4-elimination of the C-3 phosphate and the C-6 proR hydrogen from 5-enolpyruvylshikimate-3-phosphate (EPSP) to yield chorismate, which is the branch point compound that serves as the starting substrate for the three terminal pathways of aromatic amino acid biosynthesis. This reaction introduces a second double bond into the aromatic ring system. The chain is Chorismate synthase from Frankia alni (strain DSM 45986 / CECT 9034 / ACN14a).